The primary structure comprises 345 residues: S-adenosylmethionine:tRNA ribosyltransferase-isomerase (345 aa).

This sequence belongs to the QueA family. In terms of assembly, monomer.

It is found in the cytoplasm. It catalyses the reaction 7-aminomethyl-7-carbaguanosine(34) in tRNA + S-adenosyl-L-methionine = epoxyqueuosine(34) in tRNA + adenine + L-methionine + 2 H(+). It functions in the pathway tRNA modification; tRNA-queuosine biosynthesis. Transfers and isomerizes the ribose moiety from AdoMet to the 7-aminomethyl group of 7-deazaguanine (preQ1-tRNA) to give epoxyqueuosine (oQ-tRNA). The chain is S-adenosylmethionine:tRNA ribosyltransferase-isomerase from Acidiphilium cryptum (strain JF-5).